Reading from the N-terminus, the 475-residue chain is Trifunctional enzyme subunit beta, mitochondrial (475 aa).

Residues 1-34 (MISLLTYTLKNLPNTSKWALRFCMRPLSSSSQLQ) constitute a mitochondrion transit peptide. N6-acetyllysine; alternate is present on lysine 73. Lysine 73 carries the N6-succinyllysine; alternate modification. The active-site Acyl-thioester intermediate is the cysteine 139. Residues 174–221 (IRHSRKMRKMMLDLNKAKTLAQRLSIISKFRLNFLSPELPAVSEFSTS) lie within the membrane without spanning it. Lysine 189 carries the post-translational modification N6-acetyllysine; alternate. At lysine 189 the chain carries N6-succinyllysine; alternate. N6-succinyllysine occurs at positions 191 and 292. Lysine 294 bears the N6-acetyllysine; alternate mark. Residue lysine 294 is modified to N6-succinyllysine; alternate. Residue lysine 299 is modified to N6-acetyllysine. Residue lysine 333 is modified to N6-acetyllysine; alternate. Position 333 is an N6-succinyllysine; alternate (lysine 333). An N6-acetyllysine mark is found at lysine 349 and lysine 362. The Proton donor/acceptor role is filled by cysteine 459.

This sequence belongs to the thiolase-like superfamily. Thiolase family. In terms of assembly, heterotetramer of 2 alpha/HADHA and 2 beta/HADHB subunits; forms the mitochondrial trifunctional enzyme. Also purified as higher order heterooligomers including a 4 alpha/HADHA and 4 beta/HADHB heterooligomer which physiological significance remains unclear. The mitochondrial trifunctional enzyme interacts with MTLN. Interacts with RSAD2/viperin.

The protein localises to the mitochondrion. It localises to the mitochondrion inner membrane. Its subcellular location is the mitochondrion outer membrane. The protein resides in the endoplasmic reticulum. It catalyses the reaction an acyl-CoA + acetyl-CoA = a 3-oxoacyl-CoA + CoA. The enzyme catalyses butanoyl-CoA + acetyl-CoA = 3-oxohexanoyl-CoA + CoA. It carries out the reaction hexanoyl-CoA + acetyl-CoA = 3-oxooctanoyl-CoA + CoA. The catalysed reaction is octanoyl-CoA + acetyl-CoA = 3-oxodecanoyl-CoA + CoA. It catalyses the reaction decanoyl-CoA + acetyl-CoA = 3-oxododecanoyl-CoA + CoA. The enzyme catalyses dodecanoyl-CoA + acetyl-CoA = 3-oxotetradecanoyl-CoA + CoA. It carries out the reaction tetradecanoyl-CoA + acetyl-CoA = 3-oxohexadecanoyl-CoA + CoA. Its pathway is lipid metabolism; fatty acid beta-oxidation. Mitochondrial trifunctional enzyme catalyzes the last three of the four reactions of the mitochondrial beta-oxidation pathway. The mitochondrial beta-oxidation pathway is the major energy-producing process in tissues and is performed through four consecutive reactions breaking down fatty acids into acetyl-CoA. Among the enzymes involved in this pathway, the trifunctional enzyme exhibits specificity for long-chain fatty acids. Mitochondrial trifunctional enzyme is a heterotetrameric complex composed of two proteins, the trifunctional enzyme subunit alpha/HADHA carries the 2,3-enoyl-CoA hydratase and the 3-hydroxyacyl-CoA dehydrogenase activities, while the trifunctional enzyme subunit beta/HADHB described here bears the 3-ketoacyl-CoA thiolase activity. This chain is Trifunctional enzyme subunit beta, mitochondrial (HADHB), found in Bos taurus (Bovine).